Reading from the N-terminus, the 108-residue chain is Small ribosomal subunit protein bS16 (108 aa).

The segment at 82–108 (ESKFSKNTQTENKKPVSKKTTKKSKDN) is disordered. The span at 96-108 (PVSKKTTKKSKDN) shows a compositional bias: basic residues.

Belongs to the bacterial ribosomal protein bS16 family.

In Mycoplasma capricolum subsp. capricolum (strain California kid / ATCC 27343 / NCTC 10154), this protein is Small ribosomal subunit protein bS16.